The chain runs to 206 residues: Dephospho-CoA kinase (206 aa).

The DPCK domain occupies 4 to 200; the sequence is IVALTGGIGS…AHYLQLASQF (197 aa). 12–17 is an ATP binding site; that stretch reads GSGKST.

It belongs to the CoaE family.

The protein resides in the cytoplasm. It carries out the reaction 3'-dephospho-CoA + ATP = ADP + CoA + H(+). It functions in the pathway cofactor biosynthesis; coenzyme A biosynthesis; CoA from (R)-pantothenate: step 5/5. Functionally, catalyzes the phosphorylation of the 3'-hydroxyl group of dephosphocoenzyme A to form coenzyme A. This is Dephospho-CoA kinase from Shigella boydii serotype 4 (strain Sb227).